The sequence spans 139 residues: Interleukin-5 (139 aa).

The signal sequence occupies residues 1–19; the sequence is MMKILVCLPLLTLYAGCVY. N48, N77, and N91 each carry an N-linked (GlcNAc...) asparagine glycan.

This sequence belongs to the IL-5 family. Homodimer; disulfide-linked. Interacts with IL5RA. Interacts with CSF2RB.

The protein localises to the secreted. Its function is as follows. Homodimeric cytokine expressed predominantly by T-lymphocytes and NK cells that plays an important role in the survival, differentiation, and chemotaxis of eosinophils. Also acts on activated and resting B-cells to induce immunoglobulin production, growth, and differentiation. Mechanistically, exerts its biological effects through a receptor composed of IL5RA subunit and the cytokine receptor common subunit beta/CSF2RB. Binding to the receptor leads to activation of various kinases including LYN, SYK and JAK2 and thereby propagates signals through the RAS-MAPK and JAK-STAT5 pathways respectively. This is Interleukin-5 (IL5) from Notamacropus eugenii (Tammar wallaby).